We begin with the raw amino-acid sequence, 2157 residues long: DExH-box ATP-dependent RNA helicase DExH14 (2157 aa).

Residues 374 to 394 form a disordered region; it reads KAASNTQSRMPTYGTQVTVQT. Polar residues predominate over residues 375-394; sequence AASNTQSRMPTYGTQVTVQT. The 183-residue stretch at 517 to 699 folds into the Helicase ATP-binding 1 domain; that stretch reads QTVYHTNENI…FLRVNTDTGL (183 aa). Residue 530-537 coordinates ATP; that stretch reads APTGAGKT. Residues 641-644 carry the DEVH box motif; sequence DEVH. The Helicase C-terminal 1 domain maps to 734–932; it reads CYKKVVDSIK…SLKDNLNAEV (199 aa). The 308-residue stretch at 1008-1315 folds into the SEC63 1 domain; it reads CTELGRVASH…LHAETYFTIS (308 aa). In terms of domain architecture, Helicase ATP-binding 2 spans 1365 to 1540; that stretch reads HVLYHTDNNV…WLGVGEIGLF (176 aa). 1378-1385 is a binding site for ATP; the sequence is APTGSGKT. The DEIH box signature appears at 1482–1485; the sequence is DEIH. Positions 1571–1780 constitute a Helicase C-terminal 2 domain; that stretch reads NKPAYAAICT…GTIGNKEDAV (210 aa). The region spanning 1839–2150 is the SEC63 2 domain; the sequence is PTMLGTIASQ…YLGFEQEHSI (312 aa).

Belongs to the DExH box helicase family.

It is found in the nucleus. It carries out the reaction ATP + H2O = ADP + phosphate + H(+). RNA helicase that plays an essential role in pre-mRNA splicing as component of the U5 snRNP and U4/U6-U5 tri-snRNP complexes. Involved in spliceosome assembly, activation and disassembly. This chain is DExH-box ATP-dependent RNA helicase DExH14, found in Arabidopsis thaliana (Mouse-ear cress).